Reading from the N-terminus, the 331-residue chain is Ribosomal RNA small subunit methyltransferase H (331 aa).

S-adenosyl-L-methionine-binding positions include 38-40, Asp56, Phe83, Asp100, and Gln107; that span reads GGY. Residues 287–331 are disordered; that stretch reads DEAELAENPRARSARLRVGVRTDAPAGKVDPQALGTPLIPKKGRR.

It belongs to the methyltransferase superfamily. RsmH family.

It localises to the cytoplasm. The catalysed reaction is cytidine(1402) in 16S rRNA + S-adenosyl-L-methionine = N(4)-methylcytidine(1402) in 16S rRNA + S-adenosyl-L-homocysteine + H(+). Specifically methylates the N4 position of cytidine in position 1402 (C1402) of 16S rRNA. The polypeptide is Ribosomal RNA small subunit methyltransferase H (Cereibacter sphaeroides (strain ATCC 17023 / DSM 158 / JCM 6121 / CCUG 31486 / LMG 2827 / NBRC 12203 / NCIMB 8253 / ATH 2.4.1.) (Rhodobacter sphaeroides)).